Here is a 192-residue protein sequence, read N- to C-terminus: A-type ATP synthase subunit E (192 aa).

The protein belongs to the V-ATPase E subunit family. Has multiple subunits with at least A(3), B(3), C, D, E, F, H, I and proteolipid K(x).

The protein resides in the cell membrane. Component of the A-type ATP synthase that produces ATP from ADP in the presence of a proton gradient across the membrane. This chain is A-type ATP synthase subunit E, found in Metallosphaera sedula (strain ATCC 51363 / DSM 5348 / JCM 9185 / NBRC 15509 / TH2).